The following is a 229-amino-acid chain: Potassium/proton antiporter CemA (229 aa).

4 consecutive transmembrane segments (helical) span residues 7-27 (FNPL…SFSF), 107-127 (ILNF…YILG), 154-174 (ILLL…ELMI), and 189-209 (IISG…KYLI).

This sequence belongs to the CemA family.

It is found in the plastid. The protein localises to the chloroplast inner membrane. It carries out the reaction K(+)(in) + H(+)(out) = K(+)(out) + H(+)(in). Functionally, contributes to K(+)/H(+) antiport activity by supporting proton efflux to control proton extrusion and homeostasis in chloroplasts in a light-dependent manner to modulate photosynthesis. Prevents excessive induction of non-photochemical quenching (NPQ) under continuous-light conditions. Indirectly promotes efficient inorganic carbon uptake into chloroplasts. This is Potassium/proton antiporter CemA from Ranunculus macranthus (Large buttercup).